A 276-amino-acid chain; its full sequence is S-adenosylmethionine decarboxylase proenzyme (276 aa).

Ser126 (schiff-base intermediate with substrate; via pyruvic acid) is an active-site residue. Ser126 carries the pyruvic acid (Ser); by autocatalysis modification. The active-site Proton acceptor; for processing activity is the His131. Residue Cys154 is the Proton donor; for catalytic activity of the active site.

It belongs to the prokaryotic AdoMetDC family. Type 2 subfamily. As to quaternary structure, heterooctamer of four alpha and four beta chains arranged as a tetramer of alpha/beta heterodimers. The cofactor is pyruvate. Is synthesized initially as an inactive proenzyme. Formation of the active enzyme involves a self-maturation process in which the active site pyruvoyl group is generated from an internal serine residue via an autocatalytic post-translational modification. Two non-identical subunits are generated from the proenzyme in this reaction, and the pyruvate is formed at the N-terminus of the alpha chain, which is derived from the carboxyl end of the proenzyme. The post-translation cleavage follows an unusual pathway, termed non-hydrolytic serinolysis, in which the side chain hydroxyl group of the serine supplies its oxygen atom to form the C-terminus of the beta chain, while the remainder of the serine residue undergoes an oxidative deamination to produce ammonia and the pyruvoyl group blocking the N-terminus of the alpha chain.

The enzyme catalyses S-adenosyl-L-methionine + H(+) = S-adenosyl 3-(methylsulfanyl)propylamine + CO2. Its pathway is amine and polyamine biosynthesis; S-adenosylmethioninamine biosynthesis; S-adenosylmethioninamine from S-adenosyl-L-methionine: step 1/1. Functionally, catalyzes the decarboxylation of S-adenosylmethionine to S-adenosylmethioninamine (dcAdoMet), the propylamine donor required for the synthesis of the polyamines spermine and spermidine from the diamine putrescine. The sequence is that of S-adenosylmethionine decarboxylase proenzyme from Alcanivorax borkumensis (strain ATCC 700651 / DSM 11573 / NCIMB 13689 / SK2).